Reading from the N-terminus, the 76-residue chain is Signal recognition particle 9 kDa protein (76 aa).

Belongs to the SRP9 family. In terms of assembly, heterodimer with SRP14; binds RNA as heterodimer. Component of a signal recognition particle complex that consists of a 7SL RNA molecule of 300 nucleotides and six protein subunits: srpa-72, srpa-68, SRP54, F37F2.2/SRP19, F25G6.8/SRP14 and ZK512.4/SRP9.

It localises to the cytoplasm. Functionally, component of the signal recognition particle (SRP) complex, a ribonucleoprotein complex that mediates the cotranslational targeting of secretory and membrane proteins to the endoplasmic reticulum (ER). SRP9 together with SRP14 and the Alu portion of the SRP RNA, constitutes the elongation arrest domain of SRP. The complex of SRP9 and SRP14 is required for SRP RNA binding. This is Signal recognition particle 9 kDa protein from Caenorhabditis elegans.